A 732-amino-acid polypeptide reads, in one-letter code: Phosphoribosylformylglycinamidine synthase subunit PurL (732 aa).

H42 is an active-site residue. ATP contacts are provided by Y45 and K84. E86 lines the Mg(2+) pocket. Substrate-binding positions include 87-90 (SHNH) and R109. H88 serves as the catalytic Proton acceptor. Position 110 (D110) interacts with Mg(2+). Q238 is a substrate binding site. Position 266 (D266) interacts with Mg(2+). Substrate is bound at residue 310 to 312 (ESQ). Residues D496 and G533 each coordinate ATP. N534 is a Mg(2+) binding site. S536 is a binding site for substrate.

The protein belongs to the FGAMS family. Monomer. Part of the FGAM synthase complex composed of 1 PurL, 1 PurQ and 2 PurS subunits.

The protein localises to the cytoplasm. The catalysed reaction is N(2)-formyl-N(1)-(5-phospho-beta-D-ribosyl)glycinamide + L-glutamine + ATP + H2O = 2-formamido-N(1)-(5-O-phospho-beta-D-ribosyl)acetamidine + L-glutamate + ADP + phosphate + H(+). The protein operates within purine metabolism; IMP biosynthesis via de novo pathway; 5-amino-1-(5-phospho-D-ribosyl)imidazole from N(2)-formyl-N(1)-(5-phospho-D-ribosyl)glycinamide: step 1/2. In terms of biological role, part of the phosphoribosylformylglycinamidine synthase complex involved in the purines biosynthetic pathway. Catalyzes the ATP-dependent conversion of formylglycinamide ribonucleotide (FGAR) and glutamine to yield formylglycinamidine ribonucleotide (FGAM) and glutamate. The FGAM synthase complex is composed of three subunits. PurQ produces an ammonia molecule by converting glutamine to glutamate. PurL transfers the ammonia molecule to FGAR to form FGAM in an ATP-dependent manner. PurS interacts with PurQ and PurL and is thought to assist in the transfer of the ammonia molecule from PurQ to PurL. This Campylobacter hominis (strain ATCC BAA-381 / DSM 21671 / CCUG 45161 / LMG 19568 / NCTC 13146 / CH001A) protein is Phosphoribosylformylglycinamidine synthase subunit PurL.